The sequence spans 197 residues: Adenylate kinase isoenzyme 6 homolog FAP7 (197 aa).

ATP-binding residues include glycine 17, glycine 19, lysine 20, serine 21, and serine 22. Residues 38–61 form an NMPbind region; the sequence is NISDFAKDNDCFEGYDEGRKSHIV. The segment at 113-123 is LID; it reads ARGYHDSKIEE. Residue arginine 114 coordinates ATP. The disordered stretch occupies residues 176–197; that stretch reads PDGVTNEYQGPRSDDEDDEDSE. Tyrosine 183 carries the phosphotyrosine modification. Phosphoserine is present on residues serine 188 and serine 196.

Belongs to the adenylate kinase family. AK6 subfamily. As to quaternary structure, interacts with small ribosomal subunit protein uS11B/RPS14B. Not a structural component of 43S pre-ribosomes, but transiently interacts with them by binding to uS11/RPS14.

Its subcellular location is the cytoplasm. The protein localises to the nucleus. It carries out the reaction AMP + ATP = 2 ADP. The enzyme catalyses ATP + H2O = ADP + phosphate + H(+). Its function is as follows. Broad-specificity nucleoside monophosphate (NMP) kinase that catalyzes the reversible transfer of the terminal phosphate group between nucleoside triphosphates and monophosphates. Also has ATPase activity. Involved in the late cytoplasmic maturation steps of the 40S ribosomal particles, specifically 18S rRNA maturation. Required for cleavage of the 20S pre-rRNA at site D in the cytoplasm. While NMP activity is not required for ribosome maturation, ATPase activity is. Associates transiently with small ribosomal subunit protein uS11. ATP hydrolysis breaks the interaction with uS11. May temporarily remove uS11 from the ribosome to enable a conformational change of the ribosomal RNA that is needed for the final maturation step of the small ribosomal subunit. Promotes formation of the rotated state in 80S-like ribosomes, a key intermediate in translocation, thereby releasing the essential assembly factor DIM1 from pre-40S subunits. Its NMP activity may have a role in nuclear energy homeostasis. Involved in oxidative stress response. Required for POS9-dependent target gene transcription upon oxidative stress. This Saccharomyces cerevisiae (strain ATCC 204508 / S288c) (Baker's yeast) protein is Adenylate kinase isoenzyme 6 homolog FAP7.